The following is a 365-amino-acid chain: Phosphatidylcholine:ceramide cholinephosphotransferase 2 (365 aa).

Residues methionine 1 to glutamate 14 show a composition bias toward basic and acidic residues. The disordered stretch occupies residues methionine 1–glycine 52. The span at asparagine 15 to arginine 26 shows a compositional bias: polar residues. A run of 5 helical transmembrane segments spans residues glycine 80–valine 100, phenylalanine 128–phenylalanine 148, phenylalanine 159–leucine 179, histidine 218–isoleucine 240, and phenylalanine 248–valine 268. Residue histidine 229 is part of the active site. Residues histidine 272 and aspartate 276 contribute to the active site. Residues tyrosine 273–tryptophan 290 traverse the membrane as a helical segment. Residues tyrosine 291–threonine 365 lie on the Cytoplasmic side of the membrane. 4 S-palmitoyl cysteine lipidation sites follow: cysteine 331, cysteine 332, cysteine 343, and cysteine 348.

Belongs to the sphingomyelin synthase family. In terms of processing, palmitoylated on Cys-331, Cys-332, Cys-343 and Cys-348; which plays an important role in plasma membrane localization.

It localises to the cell membrane. The protein resides in the golgi apparatus membrane. The catalysed reaction is an N-acylsphing-4-enine + a 1,2-diacyl-sn-glycero-3-phosphocholine = a sphingomyelin + a 1,2-diacyl-sn-glycerol. It catalyses the reaction an N-acylsphinganine + a 1,2-diacyl-sn-glycero-3-phosphocholine = an N-acylsphinganine-1-phosphocholine + a 1,2-diacyl-sn-glycerol. The enzyme catalyses an N-acyl-(4R)-4-hydroxysphinganine + a 1,2-diacyl-sn-glycero-3-phosphocholine = an N-acyl-(4R)-4-hydroxysphinganine-phosphocholine + a 1,2-diacyl-sn-glycerol. It carries out the reaction an N-acylsphing-4-enine + a 1,2-diacyl-sn-glycero-3-phosphoethanolamine = an N-acylsphing-4-enine 1-phosphoethanolamine + a 1,2-diacyl-sn-glycerol. The catalysed reaction is an N-acylsphinganine + a 1,2-diacyl-sn-glycero-3-phosphoethanolamine = an N-acylsphinganine-1-phosphoethanolamine + a 1,2-diacyl-sn-glycerol. It catalyses the reaction an N-acyl-(4R)-4-hydroxysphinganine + a 1,2-diacyl-sn-glycero-3-phosphoethanolamine = an N-acyl-(4R)-4-hydroxysphinganine-1-phosphoethanolamine + a 1,2-diacyl-sn-glycerol. The enzyme catalyses 1,2-dihexadecanoyl-sn-glycero-3-phosphocholine + an N-acylsphing-4-enine = 1,2-dihexadecanoyl-sn-glycerol + a sphingomyelin. It carries out the reaction 1-(9Z-octadecenoyl)-2-acyl-sn-3-glycerol + a sphingomyelin = a 1-(9Z-octadecenoyl)-2-acyl-sn-glycero-3-phosphocholine + an N-acylsphing-4-enine. The catalysed reaction is N-hexadecanoylsphinganine + a 1,2-diacyl-sn-glycero-3-phosphocholine = N-hexadecanoyl-sphinganine-1-phosphocholine + a 1,2-diacyl-sn-glycerol. It catalyses the reaction N-hexadecanoyl-(4R)-hydroxysphinganine + a 1,2-diacyl-sn-glycero-3-phosphocholine = N-hexadecanoyl-(4R)-hydroxysphinganine-phosphocholine + a 1,2-diacyl-sn-glycerol. The enzyme catalyses N-hexadecanoylsphinganine + a 1,2-diacyl-sn-glycero-3-phosphoethanolamine = N-hexadecanoyl-sphinganine-1-phosphoethanolamine + a 1,2-diacyl-sn-glycerol. It carries out the reaction N-hexadecanoyl-(4R)-hydroxysphinganine + a 1,2-diacyl-sn-glycero-3-phosphoethanolamine = N-hexadecanoyl-(4R)-hydroxysphinganine-1-phosphoethanolamine + a 1,2-diacyl-sn-glycerol. It functions in the pathway sphingolipid metabolism. In terms of biological role, sphingomyelin synthase that primarily contributes to sphingomyelin synthesis and homeostasis at the plasma membrane. Catalyzes the reversible transfer of phosphocholine moiety in sphingomyelin biosynthesis: in the forward reaction transfers phosphocholine head group of phosphatidylcholine (PC) on to ceramide (CER) to form ceramide phosphocholine (sphingomyelin, SM) and diacylglycerol (DAG) as by-product, and in the reverse reaction transfers phosphocholine from SM to DAG to form PC and CER. The direction of the reaction appears to depend on the levels of CER and DAG in the plasma membrane. Does not use free phosphorylcholine or CDP-choline as donors. Can also transfer phosphoethanolamine head group of phosphatidylethanolamine (PE) on to ceramide (CER) to form ceramide phosphoethanolamine (CPE). Regulates receptor-mediated signal transduction via mitogenic DAG and proapoptotic CER, as well as via SM, a structural component of membrane rafts that serve as platforms for signal transduction and protein sorting. To a lesser extent, plays a role in secretory transport via regulation of DAG pool at the Golgi apparatus and its downstream effects on PRKD1. Required for normal bone matrix mineralization. The sequence is that of Phosphatidylcholine:ceramide cholinephosphotransferase 2 (SGMS2) from Macaca fascicularis (Crab-eating macaque).